The following is a 293-amino-acid chain: Ribosomal RNA small subunit methyltransferase H (293 aa).

S-adenosyl-L-methionine is bound by residues 31 to 33 (GGY), aspartate 49, phenylalanine 76, aspartate 97, and glutamine 104.

The protein belongs to the methyltransferase superfamily. RsmH family.

It localises to the cytoplasm. It carries out the reaction cytidine(1402) in 16S rRNA + S-adenosyl-L-methionine = N(4)-methylcytidine(1402) in 16S rRNA + S-adenosyl-L-homocysteine + H(+). In terms of biological role, specifically methylates the N4 position of cytidine in position 1402 (C1402) of 16S rRNA. The sequence is that of Ribosomal RNA small subunit methyltransferase H from Wolbachia sp. subsp. Drosophila simulans (strain wRi).